The primary structure comprises 555 residues: Hydrogenase-4 component G (555 aa).

This sequence belongs to the complex I 49 kDa subunit family. It depends on [4Fe-4S] cluster as a cofactor.

In terms of biological role, possible component of hydrogenase 4. The protein is Hydrogenase-4 component G of Escherichia coli (strain K12).